A 173-amino-acid chain; its full sequence is Calcium-binding protein 5 (173 aa).

EF-hand domains lie at 28 to 63, 82 to 99, 105 to 140, and 142 to 173; these read DELD…MGYM, GRVD…KLLA, IGVQ…LLGE, and LTPR…MMSR. Positions 41, 43, 45, and 52 each coordinate Ca(2+). The Ca(2+) site is built by Asp-118, Asn-120, Asp-122, Glu-124, Glu-129, Asp-155, Asn-157, Asp-159, Thr-161, and Glu-166.

Interacts with CACNA1C (via C-terminal CDB motif) in a calcium-dependent manner. Interacts with STXBP1. Interacts with MYO6. As to expression, expressed in inner and outer plexiform layers of the retina, and retinal bipolar cells (at protein level). Expressed in the inner hair cells (IHC) of the cochlea.

The protein resides in the cytoplasm. Inhibits calcium-dependent inactivation of L-type calcium channel and shifts voltage dependence of activation to more depolarized membrane potentials. Involved in the transmission of light signals. May positively regulate neurotransmitter vesicle endocytosis and exocytosis in a salt-dependent manner. May play a role in the extension and network organization of neurites. This chain is Calcium-binding protein 5 (Cabp5), found in Mus musculus (Mouse).